The following is a 270-amino-acid chain: (+)-cis,cis-nepetalactol synthase NEPS3 (270 aa).

NAD(+) is bound by residues 21–27 (GGASGIG), 46–48 (DIQ), 70–71 (DV), N97, 165–169 (YVMSK), and 198–202 (VATPL).

Belongs to the short-chain dehydrogenases/reductases (SDR) family. In terms of assembly, forms homotetramers.

It carries out the reaction (S)-8-oxocitronellyl enol = cis-cis-nepetalactol. Functionally, functions as a non-oxidoreductive cyclase to promote the formation of cis-cis-nepetalactol. Cis-cis-nepetalactol is then oxidized by NEPS1 into cis-cis-nepetalactone, which belongs to a family of metabolites that are both insect-repellent and have euphoric effect in cats. Binds NAD(+) as classical short-chain dehydrogenase/reductase (SDR), but does not utilize it for its redox-neutral cyclase activity. This Nepeta racemosa (Catmint) protein is (+)-cis,cis-nepetalactol synthase NEPS3.